We begin with the raw amino-acid sequence, 369 residues long: Cyclin-I2 (369 aa).

The segment at 1 to 116 (MASGAQLPPQ…SRKPRNLEGD (116 aa)) is disordered. Low complexity-rich tracts occupy residues 64-76 (AASL…AVPV) and 83-101 (APAG…EQAP).

Belongs to the cyclin family.

This is Cyclin-I2 (CCNI2) from Homo sapiens (Human).